The chain runs to 120 residues: NAD(P)H-quinone oxidoreductase subunit 3, chloroplastic (120 aa).

A run of 3 helical transmembrane segments spans residues 9-29, 64-84, and 88-108; these read IFWAFLIISSVIPILAFLISG, MFALVFVVFDVETVFLYPWAM, and VLGLSVFIEALIFVLILIVGS.

Belongs to the complex I subunit 3 family. As to quaternary structure, NDH is composed of at least 16 different subunits, 5 of which are encoded in the nucleus.

The protein localises to the plastid. Its subcellular location is the chloroplast thylakoid membrane. The enzyme catalyses a plastoquinone + NADH + (n+1) H(+)(in) = a plastoquinol + NAD(+) + n H(+)(out). The catalysed reaction is a plastoquinone + NADPH + (n+1) H(+)(in) = a plastoquinol + NADP(+) + n H(+)(out). Its function is as follows. NDH shuttles electrons from NAD(P)H:plastoquinone, via FMN and iron-sulfur (Fe-S) centers, to quinones in the photosynthetic chain and possibly in a chloroplast respiratory chain. The immediate electron acceptor for the enzyme in this species is believed to be plastoquinone. Couples the redox reaction to proton translocation, and thus conserves the redox energy in a proton gradient. The polypeptide is NAD(P)H-quinone oxidoreductase subunit 3, chloroplastic (Manihot esculenta (Cassava)).